Here is a 257-residue protein sequence, read N- to C-terminus: Acyl-[acyl-carrier-protein]--UDP-N-acetylglucosamine O-acyltransferase (257 aa).

The protein belongs to the transferase hexapeptide repeat family. LpxA subfamily. Homotrimer.

It localises to the cytoplasm. The enzyme catalyses a (3R)-hydroxyacyl-[ACP] + UDP-N-acetyl-alpha-D-glucosamine = a UDP-3-O-[(3R)-3-hydroxyacyl]-N-acetyl-alpha-D-glucosamine + holo-[ACP]. It functions in the pathway glycolipid biosynthesis; lipid IV(A) biosynthesis; lipid IV(A) from (3R)-3-hydroxytetradecanoyl-[acyl-carrier-protein] and UDP-N-acetyl-alpha-D-glucosamine: step 1/6. In terms of biological role, involved in the biosynthesis of lipid A, a phosphorylated glycolipid that anchors the lipopolysaccharide to the outer membrane of the cell. The protein is Acyl-[acyl-carrier-protein]--UDP-N-acetylglucosamine O-acyltransferase of Anaeromyxobacter sp. (strain Fw109-5).